Consider the following 327-residue polypeptide: MIKIGNIELSSNVILAPMSDVTDLEFRKLVKRFGAGLVVSEMIASRAMIMKSRQSMQKCAIMHDDPTSACVQLAGCEPDVIAEAAKMNEDMGAKIIDLNFGCPAKKVVGGYAGSALMRDEQLAAKIFEATVKAVKIPVTVKMRIGWDDNTRNAPTLAKIAANSGVQMVTVHGRTRCQFYSGNANWDFIRTVKEAVKIPVIANGDITNFAKAKEALQRSGADGIMVGRGVYGKPWLISQIAYYLKTGKEKPAPSIAEQLDIITKHYDAIIDYYGKSVGVPIARKHIIWYSNGLPSSAEFRCTVNLMKDPIAVKEKIAEFYMSVMDANK.

Residues 17 to 19 (PMS) and glutamine 72 contribute to the FMN site. Cysteine 102 acts as the Proton donor in catalysis. FMN-binding positions include lysine 141, 202 to 204 (NGD), and 226 to 227 (GR).

This sequence belongs to the Dus family. FMN is required as a cofactor.

The catalysed reaction is a 5,6-dihydrouridine in tRNA + NAD(+) = a uridine in tRNA + NADH + H(+). The enzyme catalyses a 5,6-dihydrouridine in tRNA + NADP(+) = a uridine in tRNA + NADPH + H(+). Its function is as follows. Catalyzes the synthesis of 5,6-dihydrouridine (D), a modified base found in the D-loop of most tRNAs, via the reduction of the C5-C6 double bond in target uridines. This Rickettsia prowazekii (strain Madrid E) protein is Probable tRNA-dihydrouridine synthase (dus).